Consider the following 83-residue polypeptide: Small ribosomal subunit protein bS16 (83 aa).

This sequence belongs to the bacterial ribosomal protein bS16 family.

This Magnetococcus marinus (strain ATCC BAA-1437 / JCM 17883 / MC-1) protein is Small ribosomal subunit protein bS16.